The chain runs to 75 residues: U6-lycotoxin-Ls1d (75 aa).

Positions 1-21 are cleaved as a signal peptide; it reads MKLLLFTALVLVVISLIEVEA. A propeptide spanning residues 22–25 is cleaved from the precursor; sequence ENER.

Belongs to the neurotoxin 19 (CSTX) family. 06 (U6-Lctx) subfamily. Post-translationally, contains 4 disulfide bonds. Expressed by the venom gland.

It is found in the secreted. In Lycosa singoriensis (Wolf spider), this protein is U6-lycotoxin-Ls1d.